Consider the following 90-residue polypeptide: Mucin-like protein 1 (90 aa).

The N-terminal stretch at 1–20 (MKFLAVLVLLGVSIFLVSAQ) is a signal peptide. T23, T24, T30, T34, T46, T47, T51, T52, T54, T55, T59, T60, T62, and T63 each carry an O-linked (GalNAc...) threonine glycan. Low complexity-rich tracts occupy residues 25–36 (AAPADTYPATGP) and 44–68 (AETT…ASTT). The segment at 25-68 (AAPADTYPATGPADDEAPDAETTAAATTATTAAPTTATTAASTT) is disordered. A run of 3 repeats spans residues 46–53 (TTAAATTA), 54–61 (TTAAPTTA), and 62–69 (TTAASTTA). A 3 X 8 AA tandem repeat of T-T-A-A-[APS]-T-T-A region spans residues 46 to 69 (TTAAATTATTAAPTTATTAASTTA). Residue S66 is glycosylated (O-linked (GalNAc...) serine). O-linked (GalNAc...) threonine glycosylation is found at T67 and T68.

O-glycosylated. As to expression, expressed in mammary, salivary glands and prostate. Also detected in lung. Mainly expressed in cancer cell lines of breast origin. Highly expressed in lymph node-positive compared with node-negative tumors. Detected in all lymph node containing metastatic cells.

The protein localises to the secreted. It localises to the membrane. Functionally, may play a role as marker for the diagnosis of metastatic breast cancer. This is Mucin-like protein 1 (MUCL1) from Homo sapiens (Human).